Reading from the N-terminus, the 63-residue chain is Large ribosomal subunit protein bL28 (63 aa).

The protein belongs to the bacterial ribosomal protein bL28 family.

The polypeptide is Large ribosomal subunit protein bL28 (Hydrogenobaculum sp. (strain Y04AAS1)).